A 64-amino-acid polypeptide reads, in one-letter code: Toxin BmKIT3 (64 aa).

The LCN-type CS-alpha/beta domain occupies 1-61 (DGYIRGSNGC…TWKSESNTCG (61 aa)). Intrachain disulfides connect cysteine 10–cysteine 60, cysteine 14–cysteine 35, cysteine 21–cysteine 42, and cysteine 25–cysteine 44. Cysteine amide is present on cysteine 60.

This sequence belongs to the long (4 C-C) scorpion toxin superfamily. Sodium channel inhibitor family. Beta subfamily. Expressed by the venom gland.

The protein localises to the secreted. Depressant insect beta-toxins cause a transient contraction paralysis followed by a slow flaccid paralysis. They bind voltage-independently at site-4 of sodium channels (Nav) and shift the voltage of activation toward more negative potentials thereby affecting sodium channel activation and promoting spontaneous and repetitive firing. The chain is Toxin BmKIT3 from Olivierus martensii (Manchurian scorpion).